We begin with the raw amino-acid sequence, 152 residues long: MAKGVAVLNSSEGVKGTIFFTHEGNGATTVTGTVSGLRPGLHGFHVHALGDNTNGCMSTGPHFNPDGKTHGAPEDANRHAGDLGNIIVGDDGTATFTITDSQIPLSGPNSIVGRAIVVHADPDDLGKGGHELSLSTGNAGGRVACGIIGLQG.

Residues His-45, His-47, and His-62 each contribute to the Cu cation site. Cys-56 and Cys-145 are disulfide-bonded. Zn(2+) contacts are provided by His-62, His-70, His-79, and Asp-82. Position 119 (His-119) interacts with Cu cation.

This sequence belongs to the Cu-Zn superoxide dismutase family. As to quaternary structure, homodimer. It depends on Cu cation as a cofactor. Zn(2+) serves as cofactor.

It localises to the cytoplasm. It carries out the reaction 2 superoxide + 2 H(+) = H2O2 + O2. Its function is as follows. Destroys radicals which are normally produced within the cells and which are toxic to biological systems. The chain is Superoxide dismutase [Cu-Zn] (SODCC) from Brassica oleracea var. capitata (Cabbage).